Reading from the N-terminus, the 427-residue chain is Endothelin-1 receptor (427 aa).

An N-terminal signal peptide occupies residues 1 to 20 (METFWLRLSFWVALVGGVIS). Residues 21-80 (DNPESYSTNLSIHVDSVATFHGTELSFVVTTHQPTNLALPSNGSMHNYCPQQTKITSAFK) are Extracellular-facing. N-linked (GlcNAc...) asparagine glycans are attached at residues asparagine 29 and asparagine 62. The chain crosses the membrane as a helical span at residues 81–102 (YINTVISCTIFIVGMVGNATLL). Residues 103–112 (RIIYQNKCMR) lie on the Cytoplasmic side of the membrane. The helical transmembrane segment at 113–132 (NGPNALIASLALGDLIYVVI) threads the bilayer. At 133-159 (DLPINVFKLLAGRWPFEQNDFGVFLCK) the chain is on the extracellular side. A disulfide bond links cysteine 158 and cysteine 239. A helical transmembrane segment spans residues 160-181 (LFPFLQKSSVGITVLNLCALSV). Residues 182-205 (DRYRAVASWSRVQGIGIPLVTAIE) are Cytoplasmic-facing. A helical membrane pass occupies residues 206–229 (IVSIWILSFILAIPEAIGFVMVPF). Residues 230 to 256 (EYKGAQHRTCMLNATSKFMEFYQDVKD) lie on the Extracellular side of the membrane. A helical membrane pass occupies residues 257–278 (WWLFGFYFCMPLVCTAIFYTLM). Residues 279 to 306 (TCEMLNRRNGSLRIALSEHLKQRREVAK) lie on the Cytoplasmic side of the membrane. Residues 307 to 328 (TVFCLVVIFALCWFPLHLSRIL) traverse the membrane as a helical segment. The Extracellular segment spans residues 329–347 (KKTVYDEMDTNRCELLSFL). The helical transmembrane segment at 348–372 (LLMDYIGINLATMNSCINPIALYFV) threads the bilayer. The Cytoplasmic portion of the chain corresponds to 373-427 (SKKFKNCFQSCLCCCCYQSKSLMTSVPMNGTSIQWKNHEQNNHNTERSSHKDSIN). At serine 425 the chain carries Phosphoserine.

Belongs to the G-protein coupled receptor 1 family. Endothelin receptor subfamily. EDNRA sub-subfamily. As to quaternary structure, interacts with HDAC7 and KAT5.

It localises to the cell membrane. In terms of biological role, receptor for endothelin-1. Mediates its action by association with G proteins that activate a phosphatidylinositol-calcium second messenger system. The rank order of binding affinities for ET-A is: ET1 &gt; ET2 &gt;&gt; ET3. This Bos taurus (Bovine) protein is Endothelin-1 receptor.